A 442-amino-acid polypeptide reads, in one-letter code: MVTRETKLTSEREVESSMAQARHNGGGGGENHPFTSLGRQSSIYSLTLDEFQHALCENGKNFGSMNMDEFLVSIWNAEENNNNQQQAAAAAGSHSVPANHNGFNNNNNNGGEGGVGVFSGGSRGNEDANNKRGIANESSLPRQGSLTLPAPLCRKTVDEVWSEIHRGGGSGNGGDSNGRSSSSNGQNNAQNGGETAARQPTFGEMTLEDFLVKAGVVREHPTNPKPNPNPNQNQNPSSVIPAAAQQQLYGVFQGTGDPSFPGQAMGVGDPSGYAKRTGGGGYQQAPPVQAGVCYGGGVGFGAGGQQMGMVGPLSPVSSDGLGHGQVDNIGGQYGVDMGGLRGRKRVVDGPVEKVVERRQRRMIKNRESAARSRARKQAYTVELEAELNQLKEENAQLKHALAELERKRKQQYFESLKSRAQPKLPKSNGRLRTLMRNPSCPL.

Positions 1–15 (MVTRETKLTSEREVE) are enriched in basic and acidic residues. The disordered stretch occupies residues 1–37 (MVTRETKLTSEREVESSMAQARHNGGGGGENHPFTSL). 2 positions are modified to phosphoserine: S42 and S64. Disordered regions lie at residues 83–151 (NQQQ…LPAP), 164–201 (IHRGGGSGNGGDSNGRSSSSNGQNNAQNGGETAARQPT), and 218–238 (REHPTNPKPNPNPNQNQNPSS). Residues 99 to 109 (NHNGFNNNNNN) show a composition bias toward low complexity. Positions 110–123 (GGEGGVGVFSGGSR) are enriched in gly residues. A compositionally biased stretch (polar residues) spans 136–146 (NESSLPRQGSL). The residue at position 145 (S145) is a Phosphoserine. Gly residues predominate over residues 167 to 176 (GGGSGNGGDS). Residues 177–193 (NGRSSSSNGQNNAQNGG) show a composition bias toward low complexity. The residue at position 201 (T201) is a Phosphothreonine. Residues 355-418 (VERRQRRMIK…KQQYFESLKS (64 aa)) form the bZIP domain. Residues 357–376 (RRQRRMIKNRESAARSRARK) are basic motif. A leucine-zipper region spans residues 383–404 (LEAELNQLKEENAQLKHALAEL). A Glycyl lysine isopeptide (Lys-Gly) (interchain with G-Cter in SUMO) cross-link involves residue K391. The interval 414–442 (ESLKSRAQPKLPKSNGRLRTLMRNPSCPL) is disordered.

Belongs to the bZIP family. ABI5 subfamily. DNA-binding homodimer. DNA-binding heterodimer with AREB3/DPBF3 or EEL/DPBF4. Interacts with ABI3, KEG, the mediator subunit MED25, and the AFP proteins AFP1, AFP2, AFP3 and AFP4. Interacts with TAP46. Interacts with the 36 kDa catalytic subunit (subunit C) of PP2A. Interacts with FYPP1 and FYPP3. Interacts with FREE1 (via C-terminus). Phosphorylated by SRK2D and SRK2I in vitro. In terms of processing, ubiquitinated. AFP1, KEG and RPN10 mediate its proteasome-dependent degradation. Its stability or degradation plays a central role in abscisic acid response. Sumoylated at Lys-391 by SIZ1. Sumoylation protects ABI5 from proteasome degradation, attenuating ABA signaling and sensitivity to ABA. In terms of tissue distribution, predominantly expressed in seeds.

The protein localises to the nucleus. Its function is as follows. Participates in ABA-regulated gene expression during seed development and subsequent vegetative stage by acting as the major mediator of ABA repression of growth. Binds to the embryo specification element and the ABA-responsive element (ABRE) of the Dc3 gene promoter and to the ABRE of the Em1 and Em6 genes promoters. Can also trans-activate its own promoter, suggesting that it is autoregulated. Plays a role in sugar-mediated senescence. This chain is Protein ABSCISIC ACID-INSENSITIVE 5 (ABI5), found in Arabidopsis thaliana (Mouse-ear cress).